Reading from the N-terminus, the 220-residue chain is Glycerol-3-phosphate acyltransferase (220 aa).

6 helical membrane passes run 11 to 31 (INVI…GYAL), 70 to 90 (LLVL…SKLF), 96 to 116 (LQWM…FLNF), 127 to 147 (GSVV…WFFV), 153 to 173 (ISSL…FFVP), and 193 to 213 (MVLI…NLLA).

Belongs to the PlsY family. Probably interacts with PlsX.

The protein resides in the cell inner membrane. The catalysed reaction is an acyl phosphate + sn-glycerol 3-phosphate = a 1-acyl-sn-glycero-3-phosphate + phosphate. It functions in the pathway lipid metabolism; phospholipid metabolism. Catalyzes the transfer of an acyl group from acyl-phosphate (acyl-PO(4)) to glycerol-3-phosphate (G3P) to form lysophosphatidic acid (LPA). This enzyme utilizes acyl-phosphate as fatty acyl donor, but not acyl-CoA or acyl-ACP. In Helicobacter pylori (strain ATCC 700392 / 26695) (Campylobacter pylori), this protein is Glycerol-3-phosphate acyltransferase.